The chain runs to 183 residues: UPF0398 protein MCCL_1095 (183 aa).

Belongs to the UPF0398 family.

In Macrococcus caseolyticus (strain JCSC5402) (Macrococcoides caseolyticum), this protein is UPF0398 protein MCCL_1095.